Consider the following 279-residue polypeptide: Aspartate/glutamate leucyltransferase (279 aa).

The interval 245–279 is disordered; the sequence is ARERGARPPRGPGALKDACDLPLSDAQPADIEDLD.

This sequence belongs to the R-transferase family. Bpt subfamily.

It is found in the cytoplasm. It catalyses the reaction N-terminal L-glutamyl-[protein] + L-leucyl-tRNA(Leu) = N-terminal L-leucyl-L-glutamyl-[protein] + tRNA(Leu) + H(+). It carries out the reaction N-terminal L-aspartyl-[protein] + L-leucyl-tRNA(Leu) = N-terminal L-leucyl-L-aspartyl-[protein] + tRNA(Leu) + H(+). In terms of biological role, functions in the N-end rule pathway of protein degradation where it conjugates Leu from its aminoacyl-tRNA to the N-termini of proteins containing an N-terminal aspartate or glutamate. The chain is Aspartate/glutamate leucyltransferase from Caulobacter vibrioides (strain ATCC 19089 / CIP 103742 / CB 15) (Caulobacter crescentus).